We begin with the raw amino-acid sequence, 129 residues long: Large ribosomal subunit protein bL17 (129 aa).

The protein belongs to the bacterial ribosomal protein bL17 family. As to quaternary structure, part of the 50S ribosomal subunit. Contacts protein L32.

The sequence is that of Large ribosomal subunit protein bL17 from Pseudomonas aeruginosa (strain UCBPP-PA14).